Reading from the N-terminus, the 371-residue chain is uncharacterized protein (371 aa).

Solcar repeat units follow at residues 3 to 98, 131 to 276, and 284 to 369; these read DDSL…CKVL, RYWG…FKSF, and KSNF…VRKW. The next 6 membrane-spanning stretches (helical) occupy residues 9-29, 73-93, 137-157, 253-273, 290-310, and 341-362; these read AIAG…LDVV, GVGP…VVYE, IFSA…IWVV, LFPS…YEYF, VLAA…HEVL, and YYSG…TFLS.

It belongs to the mitochondrial carrier (TC 2.A.29) family.

The protein localises to the mitochondrion inner membrane. This is an uncharacterized protein from Schizosaccharomyces pombe (strain 972 / ATCC 24843) (Fission yeast).